Consider the following 407-residue polypeptide: MQYDHLLVRYGELTLKGTNRKMFVNQLKDNVKRALIPLSGYHVKGKRDRMYIELSPEADINEIIQRLSKVYGIKSISPVIKIDKNEEKINQSAIQLSHDFEKGSTFKVDVKRVDKSFRLDTYELQRQVGGAILKENNNITVNVKNPDYEIKIEVRMDAIYIYEKVIAGAGGLPVGTGGKTLLMLSGGIDSPVAGIEVMKRGVTVEAIHFHSPPFTSEKAKDKVIELTRILAERVGPIKLHLVPFTEIQKQINKVVHPRYTMTSTRRMMMRISDKVVHQINANAIVNGENLGQVASQTLKSMYAINHVTATPVLRPLLTLDKEDIIKKAKELGTFETSIQPYEDCCTIFTPKNPVTEPDFDKVIKYESVFNFDEMIENAVENIETLTIDQNYKSAKEQSTDSLIKDLF.

Residues 61–165 (NEIIQRLSKV…MDAIYIYEKV (105 aa)) form the THUMP domain. ATP-binding positions include 183–184 (ML), 208–209 (HF), arginine 265, glycine 287, and glutamine 296.

Belongs to the ThiI family.

The protein resides in the cytoplasm. It carries out the reaction [ThiI sulfur-carrier protein]-S-sulfanyl-L-cysteine + a uridine in tRNA + 2 reduced [2Fe-2S]-[ferredoxin] + ATP + H(+) = [ThiI sulfur-carrier protein]-L-cysteine + a 4-thiouridine in tRNA + 2 oxidized [2Fe-2S]-[ferredoxin] + AMP + diphosphate. It catalyses the reaction [ThiS sulfur-carrier protein]-C-terminal Gly-Gly-AMP + S-sulfanyl-L-cysteinyl-[cysteine desulfurase] + AH2 = [ThiS sulfur-carrier protein]-C-terminal-Gly-aminoethanethioate + L-cysteinyl-[cysteine desulfurase] + A + AMP + 2 H(+). It participates in cofactor biosynthesis; thiamine diphosphate biosynthesis. Functionally, catalyzes the ATP-dependent transfer of a sulfur to tRNA to produce 4-thiouridine in position 8 of tRNAs, which functions as a near-UV photosensor. Also catalyzes the transfer of sulfur to the sulfur carrier protein ThiS, forming ThiS-thiocarboxylate. This is a step in the synthesis of thiazole, in the thiamine biosynthesis pathway. The sulfur is donated as persulfide by IscS. In Staphylococcus epidermidis (strain ATCC 35984 / DSM 28319 / BCRC 17069 / CCUG 31568 / BM 3577 / RP62A), this protein is Probable tRNA sulfurtransferase.